A 130-amino-acid polypeptide reads, in one-letter code: Glycine cleavage system H protein (130 aa).

Residues 24 to 106 (TLTIGITDHA…YGEGWIMRIR (83 aa)) form the Lipoyl-binding domain. N6-lipoyllysine is present on Lys-65. Residues 111–130 (DDLEQLLDPEDYQDLVADEE) are disordered.

Belongs to the GcvH family. As to quaternary structure, the glycine cleavage system is composed of four proteins: P, T, L and H. (R)-lipoate serves as cofactor.

Its function is as follows. The glycine cleavage system catalyzes the degradation of glycine. The H protein shuttles the methylamine group of glycine from the P protein to the T protein. The chain is Glycine cleavage system H protein from Alkalilimnicola ehrlichii (strain ATCC BAA-1101 / DSM 17681 / MLHE-1).